We begin with the raw amino-acid sequence, 61 residues long: Small ribosomal subunit protein uS14 (61 aa).

The Zn(2+) site is built by C24, C27, C40, and C43.

It belongs to the universal ribosomal protein uS14 family. Zinc-binding uS14 subfamily. Part of the 30S ribosomal subunit. Contacts proteins S3 and S10. Zn(2+) is required as a cofactor.

Functionally, binds 16S rRNA, required for the assembly of 30S particles and may also be responsible for determining the conformation of the 16S rRNA at the A site. This Lachnospira eligens (strain ATCC 27750 / DSM 3376 / VPI C15-48 / C15-B4) (Eubacterium eligens) protein is Small ribosomal subunit protein uS14.